The following is a 281-amino-acid chain: 3-hydroxybutyryl-CoA dehydrogenase (281 aa).

The protein belongs to the 3-hydroxyacyl-CoA dehydrogenase family.

The catalysed reaction is (3S)-3-hydroxybutanoyl-CoA + NADP(+) = acetoacetyl-CoA + NADPH + H(+). It functions in the pathway lipid metabolism; butanoate metabolism. This chain is 3-hydroxybutyryl-CoA dehydrogenase (hbd), found in Clostridioides difficile (Peptoclostridium difficile).